Reading from the N-terminus, the 451-residue chain is UDP-N-acetylmuramate--L-alanine ligase (451 aa).

Gly110–Thr116 contacts ATP.

This sequence belongs to the MurCDEF family.

Its subcellular location is the cytoplasm. It carries out the reaction UDP-N-acetyl-alpha-D-muramate + L-alanine + ATP = UDP-N-acetyl-alpha-D-muramoyl-L-alanine + ADP + phosphate + H(+). It participates in cell wall biogenesis; peptidoglycan biosynthesis. Functionally, cell wall formation. The protein is UDP-N-acetylmuramate--L-alanine ligase of Francisella tularensis subsp. holarctica (strain FTNF002-00 / FTA).